A 327-amino-acid chain; its full sequence is uncharacterized protein (327 aa).

In terms of domain architecture, S4 RNA-binding spans 12-79 (KRIDEFLAKE…LKKELDLEIE (68 aa)). Asp-136 is a catalytic residue.

It belongs to the pseudouridine synthase RluA family.

It carries out the reaction a uridine in RNA = a pseudouridine in RNA. This is an uncharacterized protein from Helicobacter pylori (strain J99 / ATCC 700824) (Campylobacter pylori J99).